A 278-amino-acid chain; its full sequence is Glucosamine-6-phosphate deaminase (278 aa).

Asp72 (proton acceptor; for enolization step) is an active-site residue. The For ring-opening step role is filled by Asp141. His143 (proton acceptor; for ring-opening step) is an active-site residue. Glu148 (for ring-opening step) is an active-site residue.

This sequence belongs to the glucosamine/galactosamine-6-phosphate isomerase family. In terms of assembly, homohexamer.

Its subcellular location is the cytoplasm. The enzyme catalyses alpha-D-glucosamine 6-phosphate + H2O = beta-D-fructose 6-phosphate + NH4(+). Its pathway is nucleotide-sugar biosynthesis; UDP-N-acetyl-alpha-D-glucosamine biosynthesis; alpha-D-glucosamine 6-phosphate from D-fructose 6-phosphate: step 1/1. Functionally, catalyzes the reversible conversion of alpha-D-glucosamine 6-phosphate (GlcN-6P) into beta-D-fructose 6-phosphate (Fru-6P) and ammonium ion, a regulatory reaction step in de novo uridine diphosphate-N-acetyl-alpha-D-glucosamine (UDP-GlcNAc) biosynthesis via hexosamine pathway. This chain is Glucosamine-6-phosphate deaminase (Gnpda1), found in Aedes aegypti (Yellowfever mosquito).